Here is a 278-residue protein sequence, read N- to C-terminus: Cation-dependent mannose-6-phosphate receptor (278 aa).

The first 21 residues, 1 to 21 (MFPFSGCWRTELLLLLLLAVA), serve as a signal peptide directing secretion. The Lumenal segment spans residues 22–186 (VRESWQIEEK…SLACSPEVSH (165 aa)). Positions 31–182 (KSCDLVGEKD…EMDSSLACSP (152 aa)) constitute an MRH domain. The cysteines at positions 33 and 79 are disulfide-linked. N-linked (GlcNAc...) asparagine glycans are attached at residues Asn-58, Asn-84, Asn-95, Asn-108, and Asn-114. 2 disulfide bridges follow: Cys-133–Cys-168 and Cys-146–Cys-180. Residues 187-211 (LSVGSILLVIFASLVAVYIIGGFLY) traverse the membrane as a helical segment. Over 212 to 278 (QRLVVGAKGM…EERDDHLLPM (67 aa)) the chain is Cytoplasmic. The tract at residues 257–278 (RGVGDDQLGEESEERDDHLLPM) is disordered. Ser-268 carries the post-translational modification Phosphoserine.

As to quaternary structure, homodimer. Binds GGA1, GGA2 and GGA3.

It is found in the lysosome membrane. In terms of biological role, transport of phosphorylated lysosomal enzymes from the Golgi complex and the cell surface to lysosomes. Lysosomal enzymes bearing phosphomannosyl residues bind specifically to mannose-6-phosphate receptors in the Golgi apparatus and the resulting receptor-ligand complex is transported to an acidic prelyosomal compartment where the low pH mediates the dissociation of the complex. The protein is Cation-dependent mannose-6-phosphate receptor (M6pr) of Mus musculus (Mouse).